A 565-amino-acid chain; its full sequence is Fusion glycoprotein F0 (565 aa).

Residues 1 to 25 form the signal peptide; that stretch reads MTAYIQRSQCISTSLLVVLTTLVSC. The Extracellular portion of the chain corresponds to 26-500; sequence QIPRDRLSNI…VGRWYNSRET (475 aa). Residues C70 and C199 are joined by a disulfide bond. Residue N104 is glycosylated (N-linked (GlcNAc...) asparagine; by host). Positions 117–141 are fusion peptide; the sequence is FFGAVIGTIALGVATSAQITAGIAL. A coiled-coil region spans residues 142-170; it reads AEAREAKRDIALIKESMTKTHKSVELLQN. A glycan (N-linked (GlcNAc...) asparagine; by host) is linked at N245. The interval 278–306 is leucine-zipper; that stretch reads LERYMVTLSVKIPILSEVPGVLIHKASSI. Intrachain disulfides connect C338–C347, C362–C370, and C401–C424. N449 is a glycosylation site (N-linked (GlcNAc...) asparagine; by host). Positions 466-491 form a coiled coil; it reads NLADATNFLQDSKAELEKARKILSEV. The helical transmembrane segment at 501 to 521 threads the bilayer; that stretch reads VITIIVVMVVILVVIIVIVIV. The Cytoplasmic segment spans residues 522–565; that stretch reads LYRLKRSMLMGNPDERIPRDTYTLEPKIRHMYTNGGFDAMAEKR.

The protein belongs to the paramyxoviruses fusion glycoprotein family. Homotrimer of disulfide-linked F1-F2. Interacts with HN and M proteins. In natural infection, inactive F0 is matured into F1 and F2 outside the cell by one or more trypsin-like, arginine-specific endoprotease secreted by the bronchial epithelial cells. One identified protease that may be involved in this process is tryptase Clara. Unlike most paramyxoviruses, Sendai F0 processing occurs on the cell surface and induces a conformational change in the protein that unmasks the fusion peptide. F0 maturation is a primary determinant for organ tropism and pathogenicity. F1 and F2 display interchain and intrachain disulfide bonds, that are necessary for correct folding and intracellular transport. In terms of processing, N-glycosylated; glycans consist of a mixture of high mannose-type oligosaccharides and of complex-type oligosaccharides. Glycosylation at Asn-245 is essential for membrane localization and F0 cleavage.

The protein localises to the virion membrane. The protein resides in the host cell membrane. In terms of biological role, class I viral fusion protein. Under the current model, the protein has at least 3 conformational states: pre-fusion native state, pre-hairpin intermediate state, and post-fusion hairpin state. During viral and plasma cell membrane fusion, the heptad repeat (HR) regions assume a trimer-of-hairpins structure, positioning the fusion peptide in close proximity to the C-terminal region of the ectodomain. The formation of this structure appears to drive apposition and subsequent fusion of viral and plasma cell membranes. Directs fusion of viral and cellular membranes leading to delivery of the nucleocapsid into the cytoplasm. This fusion is pH independent and occurs directly at the outer cell membrane. The trimer of F1-F2 (F protein) interacts with HN tetramer at the virion surface. Upon HN binding to its cellular receptor, the hydrophobic fusion peptide is unmasked and interacts with the cellular membrane, inducing the fusion between cell and virion membranes. Later in infection, F proteins expressed at the plasma membrane of infected cells could mediate fusion with adjacent cells to form syncytia, a cytopathic effect that could lead to tissue necrosis. This chain is Fusion glycoprotein F0 (F), found in Cavia cutleri (Guinea pig).